A 532-amino-acid polypeptide reads, in one-letter code: Metal-staphylopine-binding protein CntA (532 aa).

The signal sequence occupies residues Met-1 to Gly-20. A lipid anchor (N-palmitoyl cysteine) is attached at Cys-21. A lipid anchor (S-diacylglycerol cysteine) is attached at Cys-21. Residues Arg-165, Arg-418, and Asn-448 each coordinate staphylopine.

It belongs to the bacterial solute-binding protein 5 family. The complex is composed of two ATP-binding proteins (CntD and CntF), two transmembrane proteins (CntB and CntC) and a solute-binding protein (CntA).

Its subcellular location is the cell membrane. With respect to regulation, nickel/cobalt import is reduced in the presence of zinc. Functionally, part of the ABC transporter complex CntABCDF (Opp1) involved in the uptake of metal in complex with the metallophore staphylopine (StP). Involved in the import of divalent metals ions such as nickel, cobalt and zinc. Binds the metal via the metallophore StP, and transfers the StP-metal complex to the membrane-bound permease. Binds one molecule of StP/metal. Binds StP/Co(2+) and StP/Ni(2+) tighter than StP/Zn(2+). Plays a major role in nickel/cobalt import in zinc-depleted conditions. Contributes to virulence. Required for full urease activity in vitro. The polypeptide is Metal-staphylopine-binding protein CntA (Staphylococcus aureus (strain NCTC 8325 / PS 47)).